A 249-amino-acid polypeptide reads, in one-letter code: tRNA (guanine-N(1)-)-methyltransferase (249 aa).

Residues Gly-118 and 138–143 (IGDYVL) contribute to the S-adenosyl-L-methionine site.

It belongs to the RNA methyltransferase TrmD family. Homodimer.

It localises to the cytoplasm. The catalysed reaction is guanosine(37) in tRNA + S-adenosyl-L-methionine = N(1)-methylguanosine(37) in tRNA + S-adenosyl-L-homocysteine + H(+). Functionally, specifically methylates guanosine-37 in various tRNAs. The chain is tRNA (guanine-N(1)-)-methyltransferase from Alkaliphilus oremlandii (strain OhILAs) (Clostridium oremlandii (strain OhILAs)).